The chain runs to 147 residues: Large ribosomal subunit protein uL15 (147 aa).

Residues 1-13 (MRLHDLKPAEGAR) show a composition bias toward basic and acidic residues. A disordered region spans residues 1-58 (MRLHDLKPAEGARRERKRVGRGIGSGHGKTSGRGQKGQKARSGGGVRPGFEGGQMPLT). 2 stretches are compositionally biased toward gly residues: residues 21–35 (RGIGSGHGKTSGRGQ) and 42–52 (SGGGVRPGFEG).

It belongs to the universal ribosomal protein uL15 family. In terms of assembly, part of the 50S ribosomal subunit.

Its function is as follows. Binds to the 23S rRNA. This Thermoanaerobacter sp. (strain X514) protein is Large ribosomal subunit protein uL15.